Reading from the N-terminus, the 147-residue chain is Acidic phospholipase A2 beta-bungarotoxin A3 chain (147 aa).

The first 19 residues, 1–19, serve as a signal peptide directing secretion; it reads MYPAHLLVLSAVCVSLLGA. The propeptide occupies 20 to 27; sequence ANIPPHPL. Cystine bridges form between cysteine 54–cysteine 146, cysteine 56–cysteine 72, cysteine 71–cysteine 127, cysteine 78–cysteine 120, cysteine 88–cysteine 113, and cysteine 106–cysteine 118. 3 residues coordinate Ca(2+): tyrosine 55, glycine 57, and glycine 59. The active site involves histidine 75. Residue aspartate 76 participates in Ca(2+) binding. The active site involves aspartate 121.

It belongs to the phospholipase A2 family. Group I subfamily. D49 sub-subfamily. In terms of assembly, heterodimer; disulfide-linked. The A chains have phospholipase A2 activity and the B chains show homology with the basic protease inhibitors. The A3 chain is found in beta-5 bungarotoxins. It depends on Ca(2+) as a cofactor. Expressed by the venom gland.

It localises to the secreted. It catalyses the reaction a 1,2-diacyl-sn-glycero-3-phosphocholine + H2O = a 1-acyl-sn-glycero-3-phosphocholine + a fatty acid + H(+). In terms of biological role, snake venom phospholipase A2 (PLA2) that inhibits neuromuscular transmission by blocking acetylcholine release from the nerve termini. PLA2 catalyzes the calcium-dependent hydrolysis of the 2-acyl groups in 3-sn-phosphoglycerides. The protein is Acidic phospholipase A2 beta-bungarotoxin A3 chain of Bungarus multicinctus (Many-banded krait).